Consider the following 297-residue polypeptide: Nucleotide-binding protein DSY4845 (297 aa).

An ATP-binding site is contributed by 13–20 (GLSGAGKT). 64-67 (DLRG) serves as a coordination point for GTP.

The protein belongs to the RapZ-like family.

Its function is as follows. Displays ATPase and GTPase activities. This is Nucleotide-binding protein DSY4845 from Desulfitobacterium hafniense (strain Y51).